A 132-amino-acid chain; its full sequence is Small ribosomal subunit protein uS8c (132 aa).

This sequence belongs to the universal ribosomal protein uS8 family. Part of the 30S ribosomal subunit.

It is found in the plastid. The protein resides in the chloroplast. Functionally, one of the primary rRNA binding proteins, it binds directly to 16S rRNA central domain where it helps coordinate assembly of the platform of the 30S subunit. The chain is Small ribosomal subunit protein uS8c (rps8) from Calycanthus floridus var. glaucus (Eastern sweetshrub).